Here is a 274-residue protein sequence, read N- to C-terminus: Secreted RxLR effector protein 144 (274 aa).

The signal sequence occupies residues 1–20 (MRPWLLLLVGLSSFFALSTS). The short motif at 49-72 (RKLRAFGGDTNTLKDSGKARREEK) is the RxLR-dEER element.

Belongs to the RxLR effector family.

It localises to the secreted. The protein localises to the host nucleus. The protein resides in the host cytoplasm. Secreted effector that completely suppresses the host cell death induced by cell death-inducing proteins. This chain is Secreted RxLR effector protein 144, found in Plasmopara viticola (Downy mildew of grapevine).